We begin with the raw amino-acid sequence, 766 residues long: 5-methyltetrahydropteroyltriglutamate--homocysteine methyltransferase 1 (766 aa).

The 5-methyltetrahydropteroyltri-L-glutamate site is built by lysine 18 and asparagine 116. L-homocysteine is bound by residues 438–440 and glutamate 491; that span reads IGS. L-methionine-binding positions include 438–440 and glutamate 491; that span reads IGS. 5-methyltetrahydropteroyltri-L-glutamate-binding positions include aspartate 496, tyrosine 519, 522-523, and tryptophan 568; that span reads RC. L-homocysteine is bound at residue aspartate 606. Aspartate 606 contacts L-methionine. The Zn(2+) site is built by histidine 648, cysteine 650, histidine 659, and glutamate 672. Catalysis depends on histidine 702, which acts as the Proton donor. Zn(2+) is bound at residue cysteine 734.

The protein belongs to the vitamin-B12 independent methionine synthase family. Zn(2+) serves as cofactor.

The protein localises to the cytoplasm. It localises to the cytosol. It carries out the reaction 5-methyltetrahydropteroyltri-L-glutamate + L-homocysteine = tetrahydropteroyltri-L-glutamate + L-methionine. It functions in the pathway amino-acid biosynthesis; L-methionine biosynthesis via de novo pathway; L-methionine from L-homocysteine (MetE route): step 1/1. Catalyzes the transfer of a methyl group from 5-methyltetrahydrofolate to homocysteine resulting in methionine formation. The protein is 5-methyltetrahydropteroyltriglutamate--homocysteine methyltransferase 1 of Oryza sativa subsp. japonica (Rice).